Consider the following 104-residue polypeptide: Antitoxin HigA-2 (104 aa).

Residues 45–98 (IVSIREQFNMSRGVFARLLHTSSRTLENWEQGRSVPNGQAVTLLKLVQRHPETL) form the HTH cro/C1-type domain. The H-T-H motif DNA-binding region spans 56–75 (RGVFARLLHTSSRTLENWEQ).

Antitoxin component of a type II toxin-antitoxin (TA) system that counteracts the effect of the HigB-2 toxin. Binds to its own promoter and regulates transcription of the higB-2/higA-2 operon. This Vibrio cholerae serotype O1 (strain ATCC 39315 / El Tor Inaba N16961) protein is Antitoxin HigA-2 (higA-2).